A 507-amino-acid polypeptide reads, in one-letter code: Maturase K (507 aa).

This sequence belongs to the intron maturase 2 family. MatK subfamily.

The protein localises to the plastid. Its subcellular location is the chloroplast. In terms of biological role, usually encoded in the trnK tRNA gene intron. Probably assists in splicing its own and other chloroplast group II introns. This is Maturase K from Kalmia procumbens (Alpine azalea).